Here is a 343-residue protein sequence, read N- to C-terminus: Transmembrane protein 120A (343 aa).

At 1–132 the chain is on the cytoplasmic side; that stretch reads MQPPPPGPLG…KQAKFAYKDE (132 aa). A CoA-binding site is contributed by Lys130. A helical transmembrane segment spans residues 133–152; it reads YEKFKLYLTIILILISFTCR. Topologically, residues 153 to 158 are extracellular; sequence FLLNSR. A helical transmembrane segment spans residues 159–177; it reads VTDAAFNFLLVWYYCTLTI. At 178-190 the chain is on the cytoplasmic side; it reads RESILINNGSRIK. Residues Ser187 and Arg188 each contribute to the CoA site. The helical transmembrane segment at 191 to 209 threads the bilayer; sequence GWWVFHHYVSTFLSGVMLT. At 210–218 the chain is on the extracellular side; that stretch reads WPDGLMYQK. The chain crosses the membrane as a helical span at residues 219 to 240; the sequence is FRNQFLSFSMYQSFVQFLQYYY. CoA contacts are provided by Gln237, Tyr240, Gln241, and His283. The Cytoplasmic segment spans residues 241-270; sequence QSGCLYRLRALGERHTMDLTVEGFQSWMWR. Residues 271 to 294 traverse the membrane as a helical segment; it reads GLTFLLPFLFFGHFWQLFNALTLF. Topologically, residues 295 to 304 are extracellular; it reads NLAQDPQCKE. The chain crosses the membrane as a helical span at residues 305-330; that stretch reads WQVLMCGFPFLLLFLGNFFTTLRVVH. Residues 331–343 are Cytoplasmic-facing; that stretch reads HKFHSQRHGSKKD. A CoA-binding site is contributed by Lys332.

It belongs to the TMEM120 family. In terms of assembly, homodimer. Forms heterooligomer with TMEM120B. Interacts with PKD2; TMEM120A inhibits PKD2 channel activity through the physical association of PKD2 with TMEM120A. Interacts (via C-terminal domain) with STING1; regulates the trafficking of STING1 from the ER to the ER-Golgi intermediate compartment to elicit antiviral effects. Expressed in nociceptors.

The protein localises to the cell membrane. It is found in the nucleus inner membrane. The protein resides in the endoplasmic reticulum. Its function is as follows. Multifunctional protein involved in mechanosensation, and plays an essential role in lipid metabolism and adipocyte differentiation. May function as a potential ion channel involved in sensing mechanical stimuli. Mediates the mechanosensitivity of the PKD2-TMEM120A channel complex through direct physical interaction. TMEM120A seems to affect mechanosensation by inhibiting PIEZO2 channels, possibly by altering cellular lipid content. TMEM120A is structurally similar to a lipid-modifying enzyme, ELOVL7, and contains a bound coenzyme A molecule, which suggests it might function as an enzyme in lipid metabolism. Additionnaly, implicated in innate immune response against Zika virus. Acts as a key activator of the antiviral signaling involving STING1. In Homo sapiens (Human), this protein is Transmembrane protein 120A.